Reading from the N-terminus, the 495-residue chain is GTPase Der (495 aa).

The EngA-type G 1 domain maps to 3 to 178; sequence AKIALVGRPN…EMRDLLPEED (176 aa). GTP is bound by residues 9–16, 57–61, and 130–133; these read GRPNVGKS, DTGGI, and NKVD. Residues 190–227 are disordered; that stretch reads TAVASADADVDADVETEGGTSASETEEGITEETVEDEP. Over residues 213-227 the composition is skewed to acidic residues; the sequence is ETEEGITEETVEDEP. The EngA-type G 2 domain maps to 231–404; that stretch reads LRLCMLGRPN…LAARIRRECS (174 aa). GTP contacts are provided by residues 237–244, 284–288, and 349–352; these read GRPNAGKS, DTAGV, and NKMD. The KH-like domain maps to 405–489; sequence VRIPTGQLNR…PMRVHFRSSH (85 aa).

The protein belongs to the TRAFAC class TrmE-Era-EngA-EngB-Septin-like GTPase superfamily. EngA (Der) GTPase family. As to quaternary structure, associates with the 50S ribosomal subunit.

Its function is as follows. GTPase that plays an essential role in the late steps of ribosome biogenesis. This Nitratidesulfovibrio vulgaris (strain DP4) (Desulfovibrio vulgaris) protein is GTPase Der.